An 823-amino-acid polypeptide reads, in one-letter code: Dolichyl-diphosphooligosaccharide--protein glycosyltransferase subunit STT3B (823 aa).

Residues 1–58 (MAEPSAPESKHKSSLNSSPWSGLMALGNSRHGHHGPGTQSASSAAAPKPGPPAGLSGG) form a disordered region. Ala2 is subject to N-acetylalanine. At 2-41 (AEPSAPESKHKSSLNSSPWSGLMALGNSRHGHHGPGTQSA) the chain is on the cytoplasmic side. Ser13, Ser18, and Ser29 each carry phosphoserine. The helical transmembrane segment at 42–83 (SSAAAPKPGPPAGLSGGLSQPAGWQSLLSFTILFLAWLAGFS) threads the bilayer. Residues 84 to 170 (SRLFAVIRFE…VHIRDVCVFL (87 aa)) are Lumenal-facing. The DXD motif 1 motif lies at 98 to 100 (EFD). Residue Asp100 coordinates Mn(2+). Residues 171 to 189 (APTFSGLTSISTFLLTREL) traverse the membrane as a helical segment. At 190 to 191 (WN) the chain is on the cytoplasmic side. The helical transmembrane segment at 192–209 (QGAGLLAACFIAIVPGYI) threads the bilayer. At 210–220 (SRSVAGSFDNE) the chain is on the lumenal side. Asp218 and Glu220 together coordinate Mn(2+). A DXD motif 2 motif is present at residues 218–220 (DNE). The helical transmembrane segment at 221–240 (GIAIFALQFTYYLWVKSVKT) threads the bilayer. Topologically, residues 241-242 (GS) are cytoplasmic. A helical membrane pass occupies residues 243–257 (VFWTMCCCLSYFYMV). At 258-262 (SAWGG) the chain is on the lumenal side. Residues 263–279 (YVFIINLIPLHVFVLLL) form a helical membrane-spanning segment. Residues 280 to 284 (MQRYS) are Cytoplasmic-facing. Residues 285 to 310 (KRVYIAYSTFYIVGLILSMQIPFVGF) form a helical membrane-spanning segment. The Lumenal segment spans residues 311–318 (QPIRTSEH). Residues 319–338 (MAAAGVFALLQAYAFLQYLR) form a helical membrane-spanning segment. Residues 339-347 (DRLTKQEFQ) lie on the Cytoplasmic side of the membrane. A helical membrane pass occupies residues 348-368 (TLFFLGVSLAAGAVFLSVIYL). Residues 369–407 (TYTGYIAPWSGRFYSLWDTGYAKIHIPIIASVSEHQPTT) are Lumenal-facing. Positions 399-402 (SVSE) match the SVSE motif motif. Residues 408–430 (WVSFFFDLHILVCTFPAGLWFCI) form a helical membrane-spanning segment. The Cytoplasmic portion of the chain corresponds to 431–436 (KNINDE). The chain crosses the membrane as a helical span at residues 437–453 (RVFVALYAISAVYFAGV). Residues 454–457 (MVRL) are Lumenal-facing. Position 456 (Arg456) interacts with dolichyl diphosphooligosaccharide. A helical transmembrane segment spans residues 458 to 479 (MLTLTPVVCMLSAIAFSNVFEH). Residues 480 to 523 (YLGDDMKRENPPVEDSSDEDDKRNPGNLYDKAGKVRKHVTEQEK) lie on the Cytoplasmic side of the membrane. Positions 487-526 (RENPPVEDSSDEDDKRNPGNLYDKAGKVRKHVTEQEKPEE) are disordered. A phosphoserine mark is found at Ser495 and Ser496. The segment covering 517-526 (HVTEQEKPEE) has biased composition (basic and acidic residues). A helical transmembrane segment spans residues 524-549 (PEEGLGPNIKSIVTMLMLMLLMMFAV). At 550-823 (HCTWVTSNAY…KGKKTSKKTV (274 aa)) the chain is on the lumenal side. The interval 601–603 (WWD) is interacts with target acceptor peptide in protein substrate. The WWDYG motif motif lies at 601–605 (WWDYG). Dolichyl diphosphooligosaccharide is bound at residue Tyr606. N-linked (GlcNAc...) asparagine glycosylation is found at Asn613 and Asn620. The N-linked (GlcNAc...) (high mannose) asparagine glycan is linked to Asn624. Asn638 is a glycosylation site (N-linked (GlcNAc...) asparagine). The DK motif signature appears at 668 to 675 (DINKFLWM).

This sequence belongs to the STT3 family. As to quaternary structure, component of the oligosaccharyltransferase (OST) complex. There are 2 OST complexes, OST-A and OST-B, which contain STT3A or STT3B as catalytic subunit, respectively. OST-A and OST-B contain common core subunits RPN1, RPN2, OST48, OST4, DAD1 and TMEM258, and OST-B contains either MAGT1 or TUSC3 as specific accessory subunit. Mg(2+) is required as a cofactor. Mn(2+) serves as cofactor.

The protein resides in the endoplasmic reticulum membrane. The catalysed reaction is a di-trans,poly-cis-dolichyl diphosphooligosaccharide + L-asparaginyl-[protein] = N(4)-(oligosaccharide-(1-&gt;4)-N-acetyl-beta-D-glucosaminyl-(1-&gt;4)-N-acetyl-beta-D-glucosaminyl)-L-asparaginyl-[protein] + a di-trans,poly-cis-dolichyl diphosphate + H(+). The protein operates within protein modification; protein glycosylation. Catalytic subunit of the oligosaccharyl transferase (OST) complex that catalyzes the initial transfer of a defined glycan (Glc(3)Man(9)GlcNAc(2) in eukaryotes) from the lipid carrier dolichol-pyrophosphate to an asparagine residue within an Asn-X-Ser/Thr consensus motif in nascent polypeptide chains, the first step in protein N-glycosylation. N-glycosylation occurs cotranslationally and the complex associates with the Sec61 complex at the channel-forming translocon complex that mediates protein translocation across the endoplasmic reticulum (ER). All subunits are required for a maximal enzyme activity. This subunit contains the active site and the acceptor peptide and donor lipid-linked oligosaccharide (LLO) binding pockets. STT3B is present in a small subset of OST complexes and mediates both cotranslational and post-translational N-glycosylation of target proteins: STT3B-containing complexes are required for efficient post-translational glycosylation and while they are less competent than STT3A-containing complexes for cotranslational glycosylation, they have the ability to mediate glycosylation of some nascent sites that are not accessible for STT3A. STT3B-containing complexes also act post-translationally and mediate modification of skipped glycosylation sites in unfolded proteins. Plays a role in ER-associated degradation (ERAD) pathway that mediates ubiquitin-dependent degradation of misfolded endoplasmic reticulum proteins by mediating N-glycosylation of unfolded proteins, which are then recognized by the ERAD pathway and targeted for degradation. The polypeptide is Dolichyl-diphosphooligosaccharide--protein glycosyltransferase subunit STT3B (Mus musculus (Mouse)).